A 774-amino-acid chain; its full sequence is Alpha,alpha-trehalose phosphorylase (774 aa).

369 to 370 (WD) serves as a coordination point for substrate. Glu498 (proton donor) is an active-site residue. 610–611 (KQ) contacts substrate.

Belongs to the glycosyl hydrolase 65 family. Homodimer.

The catalysed reaction is alpha,alpha-trehalose + phosphate = beta-D-glucose 1-phosphate + D-glucose. It participates in glycan degradation; trehalose degradation. Inhibited by Cu(2+), Hg(2+), Mg(2+), Mn(2+), Pb(2+) and Zn(2+). Catalyzes the reversible phosphorolytic cleavage of trehalose. Phosphorolysis is specific for trehalose, but D-xylose, D-galactose, L-arabinose, D-fucose, L-fucose, D-glucosamine and 2-deoxy D-glucose can act as substitutes for D-glucose in the synthetic reaction. This Thermoanaerobacter brockii (Thermoanaerobium brockii) protein is Alpha,alpha-trehalose phosphorylase (treP).